We begin with the raw amino-acid sequence, 111 residues long: Resistin-like beta (111 aa).

The N-terminal stretch at 1–23 is a signal peptide; it reads MGPSSCLLLILIPLLQLINPGST. Cystine bridges form between C55–C108, C67–C107, C76–C93, C78–C95, and C82–C97.

Belongs to the resistin/FIZZ family. As to quaternary structure, homodimer; disulfide-linked. Expressed only in the gastrointestinal tract, particularly the colon.

The protein resides in the secreted. In terms of biological role, probable hormone. The protein is Resistin-like beta (RETNLB) of Homo sapiens (Human).